The following is a 303-amino-acid chain: uncharacterized protein (303 aa).

This is an uncharacterized protein from Leptospira interrogans.